The sequence spans 615 residues: DNA mismatch repair protein MutL (615 aa).

The interval 363–397 (FAEPAAREPVAPRYTPAPASGSRPAAPWPNAQPGY) is disordered. Low complexity predominate over residues 364 to 391 (AEPAAREPVAPRYTPAPASGSRPAAPWP).

Belongs to the DNA mismatch repair MutL/HexB family.

Its function is as follows. This protein is involved in the repair of mismatches in DNA. It is required for dam-dependent methyl-directed DNA mismatch repair. May act as a 'molecular matchmaker', a protein that promotes the formation of a stable complex between two or more DNA-binding proteins in an ATP-dependent manner without itself being part of a final effector complex. The chain is DNA mismatch repair protein MutL from Shigella boydii serotype 18 (strain CDC 3083-94 / BS512).